The sequence spans 716 residues: Exocyst complex component 8 (716 aa).

S15 is subject to Phosphoserine. Residues 110-119 show a composition bias toward low complexity; that stretch reads STGEDTAGAG. The disordered stretch occupies residues 110 to 149; sequence STGEDTAGAGPRERGAAQAGFLPGPAGVPREGPGTGEEGK. Residues 173–273 form the PH domain; the sequence is YLVYNGDLVE…WLEVLEETKR (101 aa). A compositionally biased stretch (basic and acidic residues) spans 275–284; sequence LSDKRRREQE. Residues 275–319 form a disordered region; sequence LSDKRRREQEEAAALRAPPPVTSKGSNPFEDEAEEELATPEAEEE. Residues 303-319 are compositionally biased toward acidic residues; the sequence is FEDEAEEELATPEAEEE. Phosphothreonine is present on T313.

It belongs to the EXO84 family. In terms of assembly, the exocyst complex is composed of EXOC1, EXOC2, EXOC3, EXOC4, EXOC5, EXOC6, EXOC7 and EXOC8. Interacts (via PH domain) with GTP-bound RALA and RALB. Interacts with SH3BP1; required for the localization of both SH3BP1 and the exocyst to the leading edge of migrating cells.

The protein localises to the cytoplasm. It is found in the perinuclear region. It localises to the cell projection. The protein resides in the growth cone. Functionally, component of the exocyst complex involved in the docking of exocytic vesicles with fusion sites on the plasma membrane. This Rattus norvegicus (Rat) protein is Exocyst complex component 8 (Exoc8).